Consider the following 99-residue polypeptide: MTKTVSTSKKPRKQHSPEFRSEALKLAERIGVTAAARELSLYESQLYNWRSKQQNQQTSSERELEMSTEIARLKRQLAERDEELAILQKAATYFAKRLK.

Positions 1-21 are disordered; the sequence is MTKTVSTSKKPRKQHSPEFRS.

This sequence belongs to the transposase 8 family.

Involved in the transposition of the insertion sequence IS3. In Escherichia coli (strain K12), this protein is Transposase InsE for insertion sequence IS3A (insE1).